Reading from the N-terminus, the 215-residue chain is T-complex protein 10A homolog 1 (215 aa).

The interval 1 to 25 is disordered; sequence MLAGQLEARDPKEGTHPEDPCPGAG. Over residues 7-19 the composition is skewed to basic and acidic residues; that stretch reads EARDPKEGTHPED. A coiled-coil region spans residues 69-110; sequence ADVHGKLRSHIDALREQNMELREKLRALQLQRWKARKKSAAS. The tract at residues 75-96 is leucine-zipper; it reads LRSHIDALREQNMELREKLRAL. Residues 150-163 are compositionally biased toward polar residues; that stretch reads ATLLGQRSSSNNSA. The disordered stretch occupies residues 150 to 215; sequence ATLLGQRSSS…TPCAERRGGV (66 aa).

It belongs to the TCP10 family. Self-associates (via leucine zipper). Interacts (via leucine zipper) with ZIPK/DAPK3 (via leucine zipper). Interacts with MAD4. Expressed in liver and testis. Expressed in the seminiferous tubules (at protein level).

Its subcellular location is the nucleus. Its function is as follows. May be involved in transcriptional regulation. Has in vitro transcription inhibition activity. Acts as a tumor suppressor in hepatocellular carcinoma (HCC) cells. The polypeptide is T-complex protein 10A homolog 1 (TCP10L) (Homo sapiens (Human)).